Here is a 923-residue protein sequence, read N- to C-terminus: DNA mismatch repair protein PMS1 (923 aa).

Basic and acidic residues-rich tracts occupy residues 543-553 (DMTPSERDSEL), 565-581 (NVERHEREHEKPIRFEE), and 591-601 (GDVERVSEDNP). Residues 543–603 (DMTPSERDSE…ERVSEDNPRC (61 aa)) form a disordered region.

The protein belongs to the DNA mismatch repair MutL/HexB family. As to quaternary structure, heterodimer of MLH1 and PMS1, called MutLalpha, which is the major MMR MutL activity correcting base-base mismatches as well as IDLs. The heterodimer binds double strand DNA independently of a mismatch with positive cooperativity and has more than one DNA binding site. Forms a ternary complex with either the MSH2-MSH6 (MutSalpha) or the MSH2-MSH3 heterodimer (MutSbeta), which recognize and bind to mismatch DNA. Ternary complex formation is promoted by ATP binding. As to expression, expressed at very low levels in mature leaves. Detected in rapidly dividing tissues.

It is found in the nucleus. Its function is as follows. Required for DNA mismatch repair (MMR), correcting base-base mismatches and insertion-deletion loops (IDLs) resulting from DNA replication, DNA damage or from recombination events between non-identical sequences during meiosis. Component of the MutLalpha heterodimer that forms a ternary complex with the MutS heterodimers, which initially recognize the DNA mismatches. This complex is thought to be responsible for directing the downstream MMR events, including strand discrimination, excision, and resynthesis. Plays a major role in maintaining the genetic stability of simple sequence repeats and in the repair of heteroduplex sites present in meiotic recombination intermediates. Does not seem to be required for homologous somatic recombination. The chain is DNA mismatch repair protein PMS1 (PMS1) from Arabidopsis thaliana (Mouse-ear cress).